We begin with the raw amino-acid sequence, 446 residues long: Glutamyl-tRNA reductase (446 aa).

Substrate is bound by residues Thr49–Arg52, Ser108, Glu113–Gln115, and Gln119. The active-site Nucleophile is the Cys50. Residue Gly188–Ser193 coordinates NADP(+).

This sequence belongs to the glutamyl-tRNA reductase family. Homodimer.

It carries out the reaction (S)-4-amino-5-oxopentanoate + tRNA(Glu) + NADP(+) = L-glutamyl-tRNA(Glu) + NADPH + H(+). It participates in porphyrin-containing compound metabolism; protoporphyrin-IX biosynthesis; 5-aminolevulinate from L-glutamyl-tRNA(Glu): step 1/2. Catalyzes the NADPH-dependent reduction of glutamyl-tRNA(Glu) to glutamate 1-semialdehyde (GSA). In Desulforudis audaxviator (strain MP104C), this protein is Glutamyl-tRNA reductase.